A 315-amino-acid polypeptide reads, in one-letter code: Ester hydrolase C11orf54 homolog (315 aa).

Residues His-266, His-268, and His-278 each coordinate Zn(2+).

In terms of assembly, monomer.

It localises to the nucleus. In terms of biological role, exhibits ester hydrolase activity on the substrate p-nitrophenyl acetate. The protein is Ester hydrolase C11orf54 homolog of Bos taurus (Bovine).